Reading from the N-terminus, the 594-residue chain is Potassium-transporting ATPase potassium-binding subunit (594 aa).

12 consecutive transmembrane segments (helical) span residues Gln-4–Gly-24, Gln-65–Gln-85, Ala-136–Ile-156, Leu-179–Ile-199, Leu-287–Val-307, Val-314–Ala-334, Phe-361–Val-381, Ala-390–Val-410, Gly-413–Gly-433, Met-450–Val-470, Leu-518–Ala-538, and Leu-560–Ala-580.

Belongs to the KdpA family. In terms of assembly, the system is composed of three essential subunits: KdpA, KdpB and KdpC.

The protein localises to the cell inner membrane. Part of the high-affinity ATP-driven potassium transport (or Kdp) system, which catalyzes the hydrolysis of ATP coupled with the electrogenic transport of potassium into the cytoplasm. This subunit binds the periplasmic potassium ions and delivers the ions to the membrane domain of KdpB through an intramembrane tunnel. The polypeptide is Potassium-transporting ATPase potassium-binding subunit (Bordetella avium (strain 197N)).